A 565-amino-acid polypeptide reads, in one-letter code: Proline--tRNA ligase (565 aa).

Belongs to the class-II aminoacyl-tRNA synthetase family. ProS type 1 subfamily. Homodimer.

The protein localises to the cytoplasm. The catalysed reaction is tRNA(Pro) + L-proline + ATP = L-prolyl-tRNA(Pro) + AMP + diphosphate. Its function is as follows. Catalyzes the attachment of proline to tRNA(Pro) in a two-step reaction: proline is first activated by ATP to form Pro-AMP and then transferred to the acceptor end of tRNA(Pro). As ProRS can inadvertently accommodate and process non-cognate amino acids such as alanine and cysteine, to avoid such errors it has two additional distinct editing activities against alanine. One activity is designated as 'pretransfer' editing and involves the tRNA(Pro)-independent hydrolysis of activated Ala-AMP. The other activity is designated 'posttransfer' editing and involves deacylation of mischarged Ala-tRNA(Pro). The misacylated Cys-tRNA(Pro) is not edited by ProRS. This Francisella philomiragia subsp. philomiragia (strain ATCC 25017 / CCUG 19701 / FSC 153 / O#319-036) protein is Proline--tRNA ligase.